The chain runs to 413 residues: Protein LAZY 1 (413 aa).

Residues 71–91 (FTFGGSGLLTIGTLGIAAVAV) form a helical membrane-spanning segment. The span at 103-124 (DADADSDFDDNDDTAGDDEDQV) shows a compositional bias: acidic residues. Disordered stretches follow at residues 103–127 (DADA…VDSA) and 261–308 (EDGG…ASAT). 2 short sequence motifs (nuclear localization signal) span residues 275–298 (RKAG…EKVP) and 338–345 (KKSRKRGS).

The protein belongs to the LAZY family. As to expression, expressed in the node of the stem, initiating leaf founder cells, young leaf primordia, tips of axillary meristems, spikelet pair meristems of developing tassels and ears, male flower primordia, tassels, ears, silks and seeds. Expressed in leaf sheaths, leaf pulvinus and shoot apical meristem (SAM).

It localises to the cell membrane. The protein localises to the nucleus. Its function is as follows. Involved in the regulation of shoot gravitropism, and tassel and ear development through the regulation of polar auxin transport (PAT) and auxin signaling. Acts as a negative regulator of basipetal PAT, but positive regulator of lateral auxin transport. Involved in the regulation of shoot gravitropism and leaf angle through the regulation of cell development. The protein is Protein LAZY 1 of Zea mays (Maize).